A 108-amino-acid chain; its full sequence is UPF0060 membrane protein CKO_01576 (108 aa).

The next 4 helical transmembrane spans lie at 6-26 (LLFF…WLWL), 29-49 (GATA…VWLL), 61-81 (AAYG…VDGV), and 85-105 (LYDW…VAGW).

It belongs to the UPF0060 family.

It is found in the cell inner membrane. In Citrobacter koseri (strain ATCC BAA-895 / CDC 4225-83 / SGSC4696), this protein is UPF0060 membrane protein CKO_01576.